Consider the following 624-residue polypeptide: Prickle planar cell polarity protein 3 (624 aa).

Residues 1–12 (MFARGSRRRRSG) are compositionally biased toward basic residues. Residues 1–26 (MFARGSRRRRSGRAPPEAEDPARGQP) are disordered. Residues 74 to 182 (SDFQRHSISD…TVRIFPVTIT (109 aa)) form the PET domain. LIM zinc-binding domains follow at residues 184–249 (AICE…CLRP), 250–309 (RCQA…RHAE), and 310–373 (YCDG…SETT). The segment at 371–617 (ETTAPGPGRR…SHPVMPRQTR (247 aa)) is disordered. Low complexity predominate over residues 383 to 409 (SAGTVTTPLTTSTASFSATEGTSETAS). Residues 447 to 458 (PEPPTESPGHPA) are compositionally biased toward pro residues. A phosphoserine mark is found at Ser475 and Ser491. The span at 509–541 (SCHHHHHHRRRRQRHRRRGSHHHHHHPGRHGHH) shows a compositional bias: basic residues. A compositionally biased stretch (low complexity) spans 545–564 (LGSGSDSGSCSSSPSSPSSE). Residues 587–601 (RTTQDTSTETFNSPA) are compositionally biased toward polar residues.

It belongs to the prickle / espinas / testin family. As to quaternary structure, interacts with VANGL2 via its C-terminus. The VANGL2-dependent membrane recruitment of PRICKLE3 is a prerequisite for its polarization. Interacts with WTIP. WTIP is involved in the recruitment of PRICKLE3 to the basal body. Interacts with MT-ATP8, a component of the mitochondrial complex V. As to expression, widely expressed.

The protein localises to the cytoplasm. It is found in the cell membrane. The protein resides in the mitochondrion. Its function is as follows. Involved in the planar cell polarity (PCP) pathway that is essential for the polarization of epithelial cells during morphogenetic processes, including gastrulation and neurulation. PCP is maintained by two molecular modules, the global and the core modules, PRICKLE3 being part of the core module. Distinct complexes of the core module segregate to opposite sides of the cell, where they interact with the opposite complex in the neighboring cell at or near the adherents junctions. Involved in the organization of the basal body. Involved in cilia growth and positioning. Required for proper assembly, stability, and function of mitochondrial membrane ATP synthase (mitochondrial complex V). This chain is Prickle planar cell polarity protein 3, found in Mus musculus (Mouse).